Here is a 309-residue protein sequence, read N- to C-terminus: Porphobilinogen deaminase (309 aa).

Position 242 is an S-(dipyrrolylmethanemethyl)cysteine (Cys242).

It belongs to the HMBS family. As to quaternary structure, monomer. Requires dipyrromethane as cofactor.

It catalyses the reaction 4 porphobilinogen + H2O = hydroxymethylbilane + 4 NH4(+). It participates in porphyrin-containing compound metabolism; protoporphyrin-IX biosynthesis; coproporphyrinogen-III from 5-aminolevulinate: step 2/4. Its function is as follows. Tetrapolymerization of the monopyrrole PBG into the hydroxymethylbilane pre-uroporphyrinogen in several discrete steps. The chain is Porphobilinogen deaminase from Legionella pneumophila (strain Paris).